The following is a 576-amino-acid chain: Zn(2)-C6 fungal-type transcription factor mpsE (576 aa).

Positions 15–46 form a DNA-binding region, zn(2)-C6 fungal-type; sequence CDRCRSHKLKCPQQPSTATGACQRCTRAKAQC. Polar residues predominate over residues 47–61; that stretch reads TFSPRSRAIKNTQDG. Disordered stretches follow at residues 47–123, 334–369, and 404–424; these read TFSP…GTFD, VAHA…SSTA, and HPAP…LHRR. The segment covering 95–109 has biased composition (low complexity); sequence PPQQQQSDQQKPSGS.

The protein resides in the nucleus. Functionally, transcription factor; part of the gene cluster that mediates the biosynthesis of macrophasetins, 3-decalinoyltetramic acids (DTAs) which feature a tetramate (pyrrolidine-2,4-dione) unit connected to a decalin fragment and that have potent bioactivities. The chain is Zn(2)-C6 fungal-type transcription factor mpsE from Macrophomina phaseolina (strain MS6) (Charcoal rot fungus).